The chain runs to 224 residues: Artemin (224 aa).

The N-terminal stretch at 1–39 (MELGLGEPTALSHCLRPRWQPALWPTLAALALLSSVTEA) is a signal peptide. A propeptide spanning residues 40-111 (SLDPMSRSPA…AALRGARAAR (72 aa)) is cleaved from the precursor. The interval 41–124 (LDPMSRSPAS…RSSRARATDA (84 aa)) is disordered. Positions 80-95 (RPPPQSPQPAPPPPGP) are enriched in pro residues. The segment covering 96–116 (ALQSPPAALRGARAARAGTRS) has biased composition (low complexity). Cystine bridges form between Cys127–Cys192, Cys154–Cys220, and Cys158–Cys222. Asn206 is a glycosylation site (N-linked (GlcNAc...) asparagine).

The protein belongs to the TGF-beta family. GDNF subfamily. As to quaternary structure, homodimer; disulfide-linked. Interacts with GFRA3 coreceptor and RET: forms a 2:2:2 ternary complex composed of ARTN ligand, GFRA3 and RET receptor. In terms of tissue distribution, cochlea. Expressed at higher level in sesorineural epithelium than in the modiolus region or substantia nigra.

Its subcellular location is the secreted. In terms of biological role, growth factor that supports the survival of sensory and sympathetic peripheral neurons in culture and also supports the survival of dopaminergic neurons of the ventral mid-brain. Acts by binding to its coreceptor, GFRA3, leading to autophosphorylation and activation of the RET receptor. Strong attractant of gut hematopoietic cells thus promoting the formation Peyer's patch-like structures, a major component of the gut-associated lymphoid tissue. This Rattus norvegicus (Rat) protein is Artemin (Artn).